Reading from the N-terminus, the 184-residue chain is Fungal defensin copsin (184 aa).

The N-terminal stretch at 1-23 is a signal peptide; sequence MKLSTSLLAIVAVASTFIGNALS. Positions 24–127 are excised as a propeptide; sequence ATTVPGCFAE…LGRVLPVEKR (104 aa). Pyrrolidone carboxylic acid is present on Q128. 6 cysteine pairs are disulfide-bonded: C130–C159, C137–C167, C145–C175, C149–C177, C152–C184, and C162–C181.

The protein belongs to the invertebrate defensin family. Post-translationally, contains a unique connectivity of 6 cysteine bonds in contrast to most other CS-alpha-beta defensins which are linked by 3 or 4 disulfide bonds. In terms of processing, disulfide bonds are essential for structural integrity and antibacterial activity, since activity is lost after treatment with reducing agents. Thanks to disulfide bonds and N-terminal pyroglutamate, the protein is extremely stable in a wide pH and temperature range and insensitive toward proteases.

It localises to the secreted. The protein localises to the target cell membrane. Antimicrobial peptide that acts against Gram-positive bacteria (Listeria spp., Enterococcus spp., B.subtilis, B.anthracis, P.aeruginosa). Is not active against Gram-negative bacteria. It selectively inhibits peptidoglycan biosynthesis through complex formation with the cell wall precursor lipid II (1:1 molar ratio), probably anchoring lipid II to the membrane, thus inhibiting cell wall synthesis. The interaction with lipid II involves the third position of the pentapeptide. Shows bactericidal activity at about 2-fold minimal inhibitory concentrations (MIC), but does not form pore across the membrane. The polypeptide is Fungal defensin copsin (Coprinopsis cinerea (Inky cap fungus)).